The following is a 152-amino-acid chain: Acidic phospholipase A2 (152 aa).

The signal sequence occupies residues 1–21 (MNPAHLLVLSAVCVSLLGASS). Residues 22–27 (IPPQPL) constitute a propeptide that is removed on maturation. Disulfide bonds link cysteine 38-cysteine 104, cysteine 54-cysteine 151, cysteine 56-cysteine 72, cysteine 71-cysteine 132, cysteine 78-cysteine 125, cysteine 88-cysteine 118, and cysteine 111-cysteine 123. Residues tyrosine 55, glycine 57, and glycine 59 each coordinate Ca(2+). The active site involves histidine 75. Residue aspartate 76 coordinates Ca(2+). The active site involves aspartate 126.

The protein belongs to the phospholipase A2 family. Group I subfamily. D49 sub-subfamily. Ca(2+) serves as cofactor. As to expression, expressed by the venom gland.

The protein localises to the secreted. The enzyme catalyses a 1,2-diacyl-sn-glycero-3-phosphocholine + H2O = a 1-acyl-sn-glycero-3-phosphocholine + a fatty acid + H(+). In terms of biological role, PLA2 catalyzes the calcium-dependent hydrolysis of the 2-acyl groups in 3-sn-phosphoglycerides. The polypeptide is Acidic phospholipase A2 (Ophiophagus hannah (King cobra)).